Here is a 588-residue protein sequence, read N- to C-terminus: Hyaluronan synthase 1 (588 aa).

Residues 1–28 (MKEKAAETMEIPEGIPKDLEPKHPTLWR) are Cytoplasmic-facing. Residues 29 to 49 (IIYYSFGVVLLATITAAYVAE) traverse the membrane as a helical segment. Topologically, residues 50-61 (FQVLKHEAILFS) are extracellular. A helical transmembrane segment spans residues 62–82 (LGLYGLAMLLHLMMQSLFAFL). The Cytoplasmic segment spans residues 83 to 411 (EIRRVNKSEL…IWMTYESVVS (329 aa)). The chain crosses the membrane as a helical span at residues 412-432 (FIFPFFITATVIRLIYAGTIW). A topological domain (extracellular) is located at residue Asn433. A helical transmembrane segment spans residues 434 to 454 (VVWLLLCIQIMSLFKSIYACW). Topologically, residues 455 to 456 (LR) are cytoplasmic. The helical transmembrane segment at 457–477 (GNFIMLLMSLYSMLYMTGLLP) threads the bilayer. Residues 478–505 (SKYFALLTLNKTGWGTSGRKKIVGNYMP) are Extracellular-facing. Residues 506 to 526 (ILPLSIWAAVLCGGVGYSIYM) traverse the membrane as a helical segment. At 527–543 (DCQNDWSTPEKQKEMYH) the chain is on the cytoplasmic side. Residues 544–564 (LLYGCVGYVMYWVIMAVMYWV) traverse the membrane as a helical segment. Residues 565 to 588 (WVKRCCRKRSQTVTLVHDIPDMCV) lie on the Extracellular side of the membrane.

It belongs to the NodC/HAS family. Mg(2+) is required as a cofactor. Expression moves as a gradient through the embryo. The mRNA is first expressed in the animal region of the blastula, and by early gastrula is found everywhere except in the outer layer of the dorsal blastopore lip. By mid-gastrula, protein is present in the inner ectodermal layer and the endoderm, then disappears from dorsal ectoderm as the neural plate is induced and later decays in a dorsoventral direction. Last expressed in ventral regions of the gut at the tailbud stage (at protein level).

Its subcellular location is the membrane. It carries out the reaction [hyaluronan](n) + UDP-N-acetyl-alpha-D-glucosamine = N-acetyl-beta-D-glucosaminyl-(1-&gt;4)-[hyaluronan](n) + UDP + H(+). It catalyses the reaction N-acetyl-beta-D-glucosaminyl-(1-&gt;4)-[hyaluronan](n) + UDP-alpha-D-glucuronate = [hyaluronan](n+1) + UDP + H(+). The protein operates within glycan biosynthesis; hyaluronan biosynthesis. Its function is as follows. Catalyzes the addition of GlcNAc or GlcUA monosaccharides to the nascent hyaluronan polymer. Therefore, it is essential to hyaluronan synthesis a major component of most extracellular matrices that has a structural role in tissues architectures and regulates cell adhesion, migration and differentiation. Also able to catalyze the synthesis of chito-oligosaccharide depending on the substrate. The chain is Hyaluronan synthase 1 (has1) from Xenopus laevis (African clawed frog).